The following is a 386-amino-acid chain: MAAPQNAPIPEAGKKVMSTVTLAPALGFVPIAVHFDLFGCLQEIGKPATAQDVCNFHHTKYGDTDLFSITFLHNKSMFAKVNRTSDDTLFLMGGLGFLDLLPDDVYQANAVTRFLVDTPSAQHGAMHFTSEGLLASAFLMRRLMDTKFEYPFQECDTPFQYAHKLMGNDHLAREHVYSVMHETGRLDSFNTFMTGKFGRWGTMPDRVRKLGYDLDGLLQSTAPERIRVVDIGGGRGELLLEMQATYPHLLKKENLILQEYNADIGVVPEVTEMGWNYKEDASEQPVKGALLYSMAHVLHNLSDIESIKLLNKVSRVMAPSSRLLIQEFTKNAASSTTHAAMILMHAGRERTSAEWRDLAAFAGLEITFEAYPPNGECVVEMRKVLN.

S-adenosyl-L-methionine is bound at residue Trp-200. His-299 serves as the catalytic Proton acceptor.

The protein belongs to the class I-like SAM-binding methyltransferase superfamily. Cation-independent O-methyltransferase family.

It functions in the pathway secondary metabolite biosynthesis. Functionally, O-methyltransferase; part of the gene cluster that mediates the biosynthesis of aurasperone B, a dimeric gamma-naphthopyrone. The first step in the biosynthesis of aurasperone B is the production of gamma-naphthopyrone precursor YWA1 by the non-reducing polyketide synthase albA, via condensation of one acetyl-CoA starter unit with 6 malonyl-CoA units. YWA1 is then methylated by aunE at position C-6 to yield foncesin which is further methylated at position C-8 by aunD to produce fonsecin B. A key enzyme in the biosynthetic pathway is the cytochrome P450 monooxygenase aunB which catalyzes the oxidative dimerization of fonsecin B to aurasperone B. AunB also catalyzes the oxidative dimerization of rubrofusarin B into aurasperone A. This Aspergillus niger (strain ATCC MYA-4892 / CBS 513.88 / FGSC A1513) protein is O-methyltransferase aunE.